Reading from the N-terminus, the 177-residue chain is Large ribosomal subunit protein uL22 (177 aa).

The disordered stretch occupies residues 118–177 (VESRPSREGRRGGAGESAGGARARRAQGSKAAAAKKAPASSSKKAATTTEASEEAKGGSQ). Positions 121-130 (RPSREGRRGG) are enriched in basic and acidic residues. Residues 145 to 167 (GSKAAAAKKAPASSSKKAATTTE) are compositionally biased toward low complexity.

Belongs to the universal ribosomal protein uL22 family. Part of the 50S ribosomal subunit.

Its function is as follows. This protein binds specifically to 23S rRNA; its binding is stimulated by other ribosomal proteins, e.g. L4, L17, and L20. It is important during the early stages of 50S assembly. It makes multiple contacts with different domains of the 23S rRNA in the assembled 50S subunit and ribosome. Functionally, the globular domain of the protein is located near the polypeptide exit tunnel on the outside of the subunit, while an extended beta-hairpin is found that lines the wall of the exit tunnel in the center of the 70S ribosome. The polypeptide is Large ribosomal subunit protein uL22 (Mycobacterium sp. (strain KMS)).